The sequence spans 159 residues: Phosphopantetheine adenylyltransferase (159 aa).

Residue threonine 10 participates in substrate binding. ATP is bound by residues threonine 10–phenylalanine 11 and histidine 18. Substrate contacts are provided by lysine 42, methionine 74, and arginine 88. ATP contacts are provided by residues glycine 89–arginine 91, glutamate 99, and tryptophan 124–serine 130.

It belongs to the bacterial CoaD family. As to quaternary structure, homohexamer. It depends on Mg(2+) as a cofactor.

It localises to the cytoplasm. The catalysed reaction is (R)-4'-phosphopantetheine + ATP + H(+) = 3'-dephospho-CoA + diphosphate. Its pathway is cofactor biosynthesis; coenzyme A biosynthesis; CoA from (R)-pantothenate: step 4/5. Its function is as follows. Reversibly transfers an adenylyl group from ATP to 4'-phosphopantetheine, yielding dephospho-CoA (dPCoA) and pyrophosphate. This chain is Phosphopantetheine adenylyltransferase, found in Salmonella dublin (strain CT_02021853).